Here is a 518-residue protein sequence, read N- to C-terminus: Wax ester synthase/diacylglycerol acyltransferase 6 (518 aa).

A compositionally biased stretch (basic and acidic residues) spans 1–17 (MEIKTRRDTSETSVRKD). The tract at residues 1–29 (MEIKTRRDTSETSVRKDDEEEVEEEQPLS) is disordered. Residues 1–213 (MEIKTRRDTS…LMAGSRGDSR (213 aa)) lie on the Cytoplasmic side of the membrane. The active-site Proton acceptor is H163. The disordered stretch occupies residues 185–205 (PDELPSLPNQNRSSSRSSRLM). Residues 214–234 (FLWLVMVIWSAIMLVLNTVCD) form a helical membrane-spanning segment. At 235-518 (ALEFIATTMF…VQERDSRSLD (284 aa)) the chain is on the lumenal side. The N-linked (GlcNAc...) asparagine glycan is linked to N430.

The protein in the N-terminal section; belongs to the long-chain O-acyltransferase family. In terms of tissue distribution, expressed in roots, stems, leaves, flowers and siliques.

It is found in the cell membrane. The protein localises to the endoplasmic reticulum membrane. Its subcellular location is the golgi apparatus membrane. It catalyses the reaction an acyl-CoA + a 1,2-diacyl-sn-glycerol = a triacyl-sn-glycerol + CoA. The catalysed reaction is a long chain fatty alcohol + a fatty acyl-CoA = a wax ester + CoA. It functions in the pathway glycerolipid metabolism; triacylglycerol biosynthesis. Its pathway is lipid metabolism. In terms of biological role, bifunctional wax ester synthase/diacylglycerol acyltransferase that uses acyl-CoAs with 16, 18 and 20 carbons as substrates, preferably in combination with 16:0ol alcohol. Involved in cuticular wax biosynthesis. This chain is Wax ester synthase/diacylglycerol acyltransferase 6, found in Arabidopsis thaliana (Mouse-ear cress).